Consider the following 822-residue polypeptide: Protein SIEVE ELEMENT OCCLUSION A (822 aa).

Positions 25–62 (PRSAEQRLADNAGERRPLAPRSHEDNPFGGHTDDHHVA) are disordered. Basic and acidic residues predominate over residues 28–62 (AEQRLADNAGERRPLAPRSHEDNPFGGHTDDHHVA).

As to quaternary structure, can form homodimer. Expressed in phloem sieve elements.

Scaffold protein required to form the phloem filament matrix in sieve elements. The chain is Protein SIEVE ELEMENT OCCLUSION A from Arabidopsis thaliana (Mouse-ear cress).